The sequence spans 346 residues: Glucose-6-phosphatase 3 (346 aa).

Residues 1 to 24 (MESTLGAGIVIAEALQNQLAWLEN) are Lumenal-facing. The chain crosses the membrane as a helical span at residues 25 to 45 (VWLWITFLGDPKILFLFYFPA). At 46-54 (AYYASRRVG) the chain is on the cytoplasmic side. Residues 55–75 (IAVLWISLITEWLNLIFKWFL) traverse the membrane as a helical segment. The Lumenal portion of the chain corresponds to 76-114 (FGDRPFWWVHESGYYSQAPAQVHQFPSSCETGPGSPSGH). Position 79 (R79) interacts with substrate. Catalysis depends on H114, which acts as the Proton donor. Residues 115–135 (CMITGAALWPIMTALSSQVAT) form a helical membrane-spanning segment. The Cytoplasmic segment spans residues 136–146 (RARSRWVRVMP). Residues 147 to 164 (SLAYCTFLLAVGLSRIFI) traverse the membrane as a helical segment. R161 serves as a coordination point for substrate. The Lumenal segment spans residues 165 to 169 (LAHFP). Catalysis depends on H167, which acts as the Nucleophile. Residues 170 to 186 (HQVLAGLITGAVLGWLM) traverse the membrane as a helical segment. At 187 to 197 (TPRVPMERELS) the chain is on the cytoplasmic side. The helical transmembrane segment at 198–218 (FYGLTALALMLGTSLIYWTLF) threads the bilayer. Over 219–254 (TLGLDLSWSISLAFKWCERPEWIHVDSRPFASLSRD) the chain is Lumenal. The helical transmembrane segment at 255-273 (SGAALGLGIALHSPCYAQV) threads the bilayer. Topologically, residues 274 to 283 (RRAQLGNGQK) are cytoplasmic. The helical transmembrane segment at 284–304 (IACLVLAMGLLGPLDWLGHPP) threads the bilayer. Residues 305-307 (QIS) are Lumenal-facing. Residues 308–328 (LFYIFNFLKYTLWPCLVLALV) form a helical membrane-spanning segment. The Cytoplasmic segment spans residues 329 to 346 (PWAVHMFSAQEAPPIHSS).

The protein belongs to the glucose-6-phosphatase family. Ubiquitously expressed. Highly expressed in skeletal muscle, at intermediate levels in heart, brain, placenta, kidney, colon, thymus, spleen and pancreas. Also detected in testis, prostate, ovary, liver, lung, small intestine and peripheral blood lymphocytes.

The protein localises to the endoplasmic reticulum membrane. The enzyme catalyses D-glucose 6-phosphate + H2O = D-glucose + phosphate. It participates in carbohydrate biosynthesis; gluconeogenesis. Inhibited by vanadate. Hydrolyzes glucose-6-phosphate to glucose in the endoplasmic reticulum. May form with the glucose-6-phosphate transporter (SLC37A4/G6PT) a ubiquitously expressed complex responsible for glucose production through glycogenolysis and gluconeogenesis. Probably required for normal neutrophil function. This is Glucose-6-phosphatase 3 (G6PC3) from Homo sapiens (Human).